A 772-amino-acid chain; its full sequence is Chondroitin sulfate glucuronyltransferase (772 aa).

At 1 to 6 (MRLSSL) the chain is on the cytoplasmic side. Residues 7 to 29 (LALLRPALPLILGLSLGCSLSLL) traverse the membrane as a helical; Signal-anchor for type II membrane protein segment. Residues 30 to 772 (RVSWIQGEGE…LFEQEQANST (743 aa)) are Lumenal-facing. N-linked (GlcNAc...) asparagine glycans are attached at residues Asn121 and Asn342. The interval 629 to 662 (ALSPQRSPPGPPGAGPDPPSPPGADPSRGAPIGG) is disordered. A compositionally biased stretch (pro residues) spans 634–652 (RSPPGPPGAGPDPPSPPGA).

This sequence belongs to the chondroitin N-acetylgalactosaminyltransferase family. Ubiquitous. Highly expressed in placenta, small intestine and pancreas.

The protein resides in the golgi apparatus. It localises to the golgi stack membrane. It catalyses the reaction 3-O-(beta-D-GalNAc-(1-&gt;4)-beta-D-GlcA-(1-&gt;3)-beta-D-Gal-(1-&gt;3)-beta-D-Gal-(1-&gt;4)-beta-D-Xyl)-L-seryl-[protein] + UDP-alpha-D-glucuronate = 3-O-(beta-D-GlcA-(1-&gt;3)-beta-D-GalNAc-(1-&gt;4)-beta-D-GlcA-(1-&gt;3)-beta-D-Gal-(1-&gt;3)-beta-D-Gal-(1-&gt;4)-beta-D-Xyl)-L-seryl-[protein] + UDP + H(+). The catalysed reaction is 3-O-{[beta-D-GalNAc-(1-&gt;4)-beta-D-GlcA-(1-&gt;3)](n)-beta-D-GalNAc-(1-&gt;4)-beta-D-GlcA-(1-&gt;3)-beta-D-Gal-(1-&gt;3)-beta-D-Gal-(1-&gt;4)-beta-D-Xyl}-L-seryl-[protein] + UDP-alpha-D-glucuronate = 3-O-{beta-D-GlcA-(1-&gt;3)-[beta-D-GalNAc-(1-&gt;4)-beta-D-GlcA-(1-&gt;3)](n)-beta-D-GalNAc-(1-&gt;4)-beta-D-GlcA-(1-&gt;3)-beta-D-Gal-(1-&gt;3)-beta-D-Gal-(1-&gt;4)-beta-D-Xyl}-L-seryl-[protein] + UDP + H(+). Functionally, transfers glucuronic acid (GlcUA) from UDP-GlcUA to N-acetylgalactosamine residues on the non-reducing end of the elongating chondroitin polymer. Has no N-acetylgalactosaminyltransferase activity. This is Chondroitin sulfate glucuronyltransferase (CHPF2) from Homo sapiens (Human).